The primary structure comprises 168 residues: N-alpha-acetyltransferase (168 aa).

Residues Tyr13–Leu168 form the N-acetyltransferase domain. Tyr38 serves as a coordination point for substrate. His89 contributes to the Zn(2+) binding site. Acetyl-CoA contacts are provided by residues Ile93–Val95 and Lys101–Thr106. CoA-binding positions include Ile93–Val95 and Lys101–Thr106. Residue Glu128 coordinates Zn(2+). Acetyl-CoA contacts are provided by residues Asn133 and Tyr140–Lys142. A CoA-binding site is contributed by Asn133. Tyr155 is a binding site for substrate.

This sequence belongs to the acetyltransferase family. ARD1 subfamily. Homodimer.

It localises to the cytoplasm. The enzyme catalyses N-terminal L-alanyl-[protein] + acetyl-CoA = N-terminal N(alpha)-acetyl-L-alanyl-[protein] + CoA + H(+). It catalyses the reaction N-terminal L-seryl-[protein] + acetyl-CoA = N-terminal N(alpha)-acetyl-L-seryl-[protein] + CoA + H(+). It carries out the reaction N-terminal L-methionyl-L-leucyl-[protein] + acetyl-CoA = N-terminal N(alpha)-acetyl-L-methionyl-L-leucyl-[protein] + CoA + H(+). The catalysed reaction is N-terminal L-methionyl-L-glutamyl-[protein] + acetyl-CoA = N-terminal N(alpha)-acetyl-L-methionyl-L-glutamyl-[protein] + CoA + H(+). In terms of biological role, displays alpha (N-terminal) acetyltransferase activity. Catalyzes the covalent attachment of an acetyl moiety from acetyl-CoA to the free alpha-amino group at the N-terminus of a protein. The sequence is that of N-alpha-acetyltransferase from Sulfolobus acidocaldarius (strain ATCC 33909 / DSM 639 / JCM 8929 / NBRC 15157 / NCIMB 11770).